Reading from the N-terminus, the 403-residue chain is Argininosuccinate synthase (403 aa).

ATP-binding positions include 13–21 (AYSGGLDTS) and Ala40. L-citrulline contacts are provided by Tyr91 and Ser96. Position 121 (Gly121) interacts with ATP. Thr123, Asn127, and Asp128 together coordinate L-aspartate. Asn127 lines the L-citrulline pocket. L-citrulline contacts are provided by Arg131, Ser180, Ser189, Glu265, and Tyr277.

This sequence belongs to the argininosuccinate synthase family. Type 1 subfamily. As to quaternary structure, homotetramer.

Its subcellular location is the cytoplasm. The enzyme catalyses L-citrulline + L-aspartate + ATP = 2-(N(omega)-L-arginino)succinate + AMP + diphosphate + H(+). It functions in the pathway amino-acid biosynthesis; L-arginine biosynthesis; L-arginine from L-ornithine and carbamoyl phosphate: step 2/3. The sequence is that of Argininosuccinate synthase from Leptospira borgpetersenii serovar Hardjo-bovis (strain JB197).